We begin with the raw amino-acid sequence, 155 residues long: Fibroblast growth factor 1 (155 aa).

Ala-2 carries the post-translational modification N-acetylalanine. The Nuclear localization signal motif lies at 24 to 27 (KKPK). Residues 24–28 (KKPKL) and 113–116 (ISKK) each bind heparin.

This sequence belongs to the heparin-binding growth factors family. As to quaternary structure, monomer. Homodimer. Interacts with FGFR1, FGFR2, FGFR3 and FGFR4. Affinity between fibroblast growth factors (FGFs) and their receptors is increased by heparan sulfate glycosaminoglycans that function as coreceptors. Found in a complex with FGFBP1, FGF1 and FGF2. Interacts with FGFBP1. Part of a Cu(2+)-dependent multiprotein aggregate containing FGF1, S100A13 and SYT1. Interacts with S100A13. Interacts with FGFBP1. Interacts with LRRC59. Interacts with CSNKA, CSNKB and FIBP. While binding with LRRC59, CSNKA and FIBP seem mutually exclusive, CSNKB and FIBP may cooperatively interact with FGF1. Interacts with SYT1. Forms a ternary complex with FGFR1 and ITGAV:ITGB3 and induces the recruitment of PTPN11 to the complex. Post-translationally, in the nucleus, phosphorylated by PKC/PRKCD.

It is found in the secreted. Its subcellular location is the cytoplasm. The protein localises to the cell cortex. It localises to the cytosol. The protein resides in the nucleus. Plays an important role in the regulation of cell survival, cell division, angiogenesis, cell differentiation and cell migration. Functions as a potent mitogen in vitro. Acts as a ligand for FGFR1 and integrins. Binds to FGFR1 in the presence of heparin leading to FGFR1 dimerization and activation via sequential autophosphorylation on tyrosine residues which act as docking sites for interacting proteins, leading to the activation of several signaling cascades. Binds to integrin ITGAV:ITGB3. Its binding to integrin, subsequent ternary complex formation with integrin and FGFR1, and the recruitment of PTPN11 to the complex are essential for FGF1 signaling. Induces the phosphorylation and activation of FGFR1, FRS2, MAPK3/ERK1, MAPK1/ERK2 and AKT1. Can induce angiogenesis. This is Fibroblast growth factor 1 (FGF1) from Bos taurus (Bovine).